The sequence spans 595 residues: Elongation factor 4 (595 aa).

One can recognise a tr-type G domain in the interval 2 to 184 (KNIRNFSIIA…QIVERIPTPK (183 aa)). GTP is bound by residues 14–19 (DHGKST) and 131–134 (NKID).

The protein belongs to the TRAFAC class translation factor GTPase superfamily. Classic translation factor GTPase family. LepA subfamily.

It localises to the cell inner membrane. The catalysed reaction is GTP + H2O = GDP + phosphate + H(+). Required for accurate and efficient protein synthesis under certain stress conditions. May act as a fidelity factor of the translation reaction, by catalyzing a one-codon backward translocation of tRNAs on improperly translocated ribosomes. Back-translocation proceeds from a post-translocation (POST) complex to a pre-translocation (PRE) complex, thus giving elongation factor G a second chance to translocate the tRNAs correctly. Binds to ribosomes in a GTP-dependent manner. This Vesicomyosocius okutanii subsp. Calyptogena okutanii (strain HA) protein is Elongation factor 4.